The primary structure comprises 149 residues: D-aminoacyl-tRNA deacylase (149 aa).

A Gly-cisPro motif, important for rejection of L-amino acids motif is present at residues G137 to P138.

This sequence belongs to the DTD family. As to quaternary structure, homodimer.

It localises to the cytoplasm. The catalysed reaction is glycyl-tRNA(Ala) + H2O = tRNA(Ala) + glycine + H(+). The enzyme catalyses a D-aminoacyl-tRNA + H2O = a tRNA + a D-alpha-amino acid + H(+). An aminoacyl-tRNA editing enzyme that deacylates mischarged D-aminoacyl-tRNAs. Also deacylates mischarged glycyl-tRNA(Ala), protecting cells against glycine mischarging by AlaRS. Acts via tRNA-based rather than protein-based catalysis; rejects L-amino acids rather than detecting D-amino acids in the active site. By recycling D-aminoacyl-tRNA to D-amino acids and free tRNA molecules, this enzyme counteracts the toxicity associated with the formation of D-aminoacyl-tRNA entities in vivo and helps enforce protein L-homochirality. The sequence is that of D-aminoacyl-tRNA deacylase from Geobacter sp. (strain M21).